A 283-amino-acid chain; its full sequence is Shikimate kinase (283 aa).

Residue 86–96 (PIKSGLSSSSA) participates in ATP binding.

Belongs to the GHMP kinase family. Archaeal shikimate kinase subfamily.

Its subcellular location is the cytoplasm. It catalyses the reaction shikimate + ATP = 3-phosphoshikimate + ADP + H(+). It participates in metabolic intermediate biosynthesis; chorismate biosynthesis; chorismate from D-erythrose 4-phosphate and phosphoenolpyruvate: step 5/7. The protein is Shikimate kinase of Methanococcus maripaludis (strain C6 / ATCC BAA-1332).